The chain runs to 246 residues: DNA repair protein RecO (246 aa).

The protein belongs to the RecO family.

Involved in DNA repair and RecF pathway recombination. The chain is DNA repair protein RecO from Maridesulfovibrio salexigens (strain ATCC 14822 / DSM 2638 / NCIMB 8403 / VKM B-1763) (Desulfovibrio salexigens).